Here is a 152-residue protein sequence, read N- to C-terminus: SsrA-binding protein (152 aa).

It belongs to the SmpB family.

The protein localises to the cytoplasm. In terms of biological role, required for rescue of stalled ribosomes mediated by trans-translation. Binds to transfer-messenger RNA (tmRNA), required for stable association of tmRNA with ribosomes. tmRNA and SmpB together mimic tRNA shape, replacing the anticodon stem-loop with SmpB. tmRNA is encoded by the ssrA gene; the 2 termini fold to resemble tRNA(Ala) and it encodes a 'tag peptide', a short internal open reading frame. During trans-translation Ala-aminoacylated tmRNA acts like a tRNA, entering the A-site of stalled ribosomes, displacing the stalled mRNA. The ribosome then switches to translate the ORF on the tmRNA; the nascent peptide is terminated with the 'tag peptide' encoded by the tmRNA and targeted for degradation. The ribosome is freed to recommence translation, which seems to be the essential function of trans-translation. This chain is SsrA-binding protein, found in Persephonella marina (strain DSM 14350 / EX-H1).